The following is a 375-amino-acid chain: Pulmonary surfactant-associated protein D (375 aa).

The first 20 residues, 1-20 (MLLFLLSALVLLTQPLGYLE), serve as a signal peptide directing secretion. Cys35 and Cys40 each carry S-nitrosocysteine. The disordered stretch occupies residues 45–221 (SGLPGRDGRD…DKGAKGESGL (177 aa)). A Collagen-like domain is found at 46 to 222 (GLPGRDGRDG…KGAKGESGLP (177 aa)). The span at 50–65 (RDGRDGREGPRGEKGD) shows a compositional bias: basic and acidic residues. The segment covering 66 to 86 (PGLPGAAGQAGMPGQAGPVGP) has biased composition (low complexity). Pro78 carries the post-translational modification 4-hydroxyproline. The residue at position 87 (Lys87) is a 5-hydroxylysine. N-linked (GlcNAc...) asparagine glycosylation occurs at Asn90. Pro96 bears the 4-hydroxyproline mark. Position 99 is a 5-hydroxylysine (Lys99). A compositionally biased stretch (pro residues) spans 105-114 (SGPPGPPGVP). 2 stretches are compositionally biased toward low complexity: residues 116–132 (PAGR…IGPQ) and 138–150 (KGEA…VGAP). 4-hydroxyproline is present on residues Pro171 and Pro177. Over residues 204-216 (KGDKGIPGDKGAK) the composition is skewed to basic and acidic residues. The stretch at 223 to 252 (DVASLRQQVEALQGQVQHLQAAFSQYKKVE) forms a coiled coil. The region spanning 260–375 (VGEKIFKTAG…GEKRLVVCEF (116 aa)) is the C-type lectin domain. Intrachain disulfides connect Cys281–Cys373 and Cys351–Cys365.

This sequence belongs to the SFTPD family. As to quaternary structure, oligomeric complex of 4 set of homotrimers. The N-terminus is blocked. In terms of processing, hydroxylation on proline residues within the sequence motif, GXPG, is most likely to be 4-hydroxy as this fits the requirement for 4-hydroxylation in vertebrates. Post-translationally, S-nitrosylation at Cys-35 and Cys-40 alters the quaternary structure which results in a pro-inflammatory chemoattractive signaling activity with macrophages. In terms of tissue distribution, expressed in lung, brain, pancreas and adipose tissue (mainly mature adipocytes).

Its subcellular location is the secreted. It is found in the extracellular space. It localises to the extracellular matrix. The protein resides in the surface film. In terms of biological role, contributes to the lung's defense against inhaled microorganisms, organic antigens and toxins. Interacts with compounds such as bacterial lipopolysaccharides, oligosaccharides and fatty acids and modulates leukocyte action in immune response. May participate in the extracellular reorganization or turnover of pulmonary surfactant. Binds strongly maltose residues and to a lesser extent other alpha-glucosyl moieties. This is Pulmonary surfactant-associated protein D (SFTPD) from Homo sapiens (Human).